The following is a 691-amino-acid chain: Protein 4.2 (691 aa).

The N-myristoyl glycine moiety is linked to residue Gly-2. The tract at residues 31-39 is band 3 binding; sequence LFVRRGQPF. Ser-248 is modified (phosphoserine; by PKA).

The protein belongs to the transglutaminase superfamily. Transglutaminase family. In terms of assembly, component of the ankyrin-1 complex in the erythrocyte, composed of ANK1, RHCE, RHAG, SLC4A1, EPB42, GYPA, GYPB and AQP1. Interacts with SLC4A1 (via the cytoplasmic domain); this interaction is mediated by the SLC4A1 Band 3-I dimer. Interacts with ANK1 (via ANK 1-13 repeats). Interacts with AQP1 (via the C-terminal). In terms of processing, both cAMP-dependent kinase (CAPK) and another kinase present in the red-blood cells seem to be able to phosphorylate EPB42.

It is found in the cell membrane. The protein localises to the cytoplasm. Its subcellular location is the cytoskeleton. Component of the ankyrin-1 complex, a multiprotein complex involved in the stability and shape of the erythrocyte membrane. The chain is Protein 4.2 from Homo sapiens (Human).